The sequence spans 342 residues: DDB1- and CUL4-associated factor 7 (342 aa).

WD repeat units follow at residues 6–52, 60–100, 108–150, 165–206, 213–252, 257–296, and 303–342; these read KRKE…LVGL, ICRN…VWRV, ECLL…IWGL, HVKT…MFDL, TIIYEDPQHHPLLRLCWNKQDPNYLATMAMDGMEVVILDV, TPVARLNNHRACVNGIAWAPHSSCHICTAADDHQALIWDI, and IEDPILAYTAEGEINNVQWASTQPDWIAICYNNCLEILRV.

The protein belongs to the WD repeat DCAF7 family. Interacts with DYRK1A, DYRK1B and DIAPH1. Interacts with DDB1. Interacts with ZNF703. Interacts with human adenovirus 5 E1A protein.

The protein resides in the cytoplasm. Its subcellular location is the nucleus. It participates in protein modification; protein ubiquitination. Its function is as follows. Involved in craniofacial development. Acts upstream of the EDN1 pathway and is required for formation of the upper jaw equivalent, the palatoquadrate. The activity required for EDN1 pathway function differs between the first and second arches. Associates with DIAPH1 and controls GLI1 transcriptional activity. Could be involved in normal and disease skin development. May function as a substrate receptor for CUL4-DDB1 E3 ubiquitin-protein ligase complex. The protein is DDB1- and CUL4-associated factor 7 (DCAF7) of Homo sapiens (Human).